Here is an 80-residue protein sequence, read N- to C-terminus: Small ribosomal subunit protein bS18 (80 aa).

This sequence belongs to the bacterial ribosomal protein bS18 family. In terms of assembly, part of the 30S ribosomal subunit. Forms a tight heterodimer with protein bS6.

In terms of biological role, binds as a heterodimer with protein bS6 to the central domain of the 16S rRNA, where it helps stabilize the platform of the 30S subunit. In Beijerinckia indica subsp. indica (strain ATCC 9039 / DSM 1715 / NCIMB 8712), this protein is Small ribosomal subunit protein bS18.